Here is a 291-residue protein sequence, read N- to C-terminus: N-acetylmannosamine kinase (291 aa).

ATP-binding positions include 5–12 (AIDIGGTK) and 132–139 (GVGGGVVS). Zn(2+)-binding residues include H156, C166, C168, and C173.

This sequence belongs to the ROK (NagC/XylR) family. NanK subfamily. In terms of assembly, homodimer.

The catalysed reaction is an N-acyl-D-mannosamine + ATP = an N-acyl-D-mannosamine 6-phosphate + ADP + H(+). The protein operates within amino-sugar metabolism; N-acetylneuraminate degradation; D-fructose 6-phosphate from N-acetylneuraminate: step 2/5. Catalyzes the phosphorylation of N-acetylmannosamine (ManNAc) to ManNAc-6-P. This is N-acetylmannosamine kinase from Escherichia coli O127:H6 (strain E2348/69 / EPEC).